A 3032-amino-acid chain; its full sequence is MATNPQPQPPPPAPPPPPPQPQPPPPPPGPGAGPGASGPGSAGAGAGDPQLVAMIVNHLKSQGLFDQFRRDCLADVDTKPAYQNLRQRVDNFVANHLATHTWSPHLNKNQLRNNIRQQVLKSGMLESGIDRIISQVVDPKINHTFRPQVEKAVHEFLATLNHKEEAAGSTAPDDEKPESSVITQGAPAPGPSANVASDAMSILETITSLNQEANAARASTEMSNAKVSERTSRKLSSQPSTDVSTDKERGSEDATEREKATSDSGGDGLEAALKSEEPSDLPCPVEETKNHMKENNSLLLLSKDAQQESTDPKIKSMDKGEKKPDGNEKGERKKEKKEKTEKKIDHSKRNEDTQKVKDERQAKDKEVESTKLPSEKSNSRARAAEGTKEDCSLLDSDVDGLTDITVSSVHTSDLSSFEEDTEEEVVVSESMEEGEITSEDEEKNKQNKAKVQPGDSSDGKARGVRHAYVHKPYLYSKYYSDSDDELTVEQRRQSIAKEKEERLLRRRINREKLEEKRKQKAEKTKSSKVKSQGKSTVDLEDSSAKTLEPKAPRIKEVLKERKVLEKKVALSKRRRKDSRNVDENSKKKPQAEEESKEALKTTEYCEKEKASSKDLRHTHGKGEPSRPARRLSESLHSADENKTESKVEREYKRRTSTPVILEGAQEETDTRDGKKQPERSETNVEETQKQKSTLKNEKYQKKDDPETHGKGLPKKEAKSAKERPEKEKAQSEDKPSSKHKHKGDSVHKMSDETELHSSEKGETEESVRKQGQQTKLSSDDRTERKSKHKSERRLSVLGRDGKPVSEYTIKTDEHARKDNKKEKHLSSEKSKAEHKSRRSSDSKLQKDALSSKQHSVTSQKRSESCSEDKCETDSTNADSSFKPEELPHKERRRTKSLLEDKVVSKSKSKGQSKQTKAAETEAQEGVTRQVTTPKPDKEKNTEDNDTERQRKFKLEDRTSEETVTDPALENTVSSAHSAQKDSGHRAKLASIKEKHKTDKDSTSSKLERKVSDGHRSRSLKHSNKDMKKKEENKPDDKNGKEVDSSHEKGRGNGPVTEKKLSRRLCENRRGSTSQEMAKEDKLVANMSGTTSSSSLQRPKKSTETTSIPEQEPMEIDSEAAVENVSELSKTEDISSNSSQQDTDFENVTKHKATAGVLKDEFRTSMVDSKPAAAVTCKSGRGLAVTSISERHADHKSTLTKKVHSQGNPSKAAPREREPIQRGAQEVSVDSEVSRKALSRAPSENEKGQKNLKGMSKTTEECGTHRNASLEYSTDSDLLSSSGSVTVVPQKESHNSNTIPVIDREAISEGGRASTSLANHSDVPNQYSTVKKSEVHKTNGSKEGNDGFTVDMPTKANGGSKRHLSEDSQATLLYSKESKISIPLADKSMSVTGDNKNINKQRSLMGTAKRESDLKVNPDIKQDSAAGEHVVDLSTRKEAETVRRKHNKEIPTDVERKTENSEVDTSARRDSAPVPQQRHGKMERGAAGSGRRDKAFIATSTEGTDKGIMLNTVKTGDATTTSSEVGEKGTALPCTSIEADEGFMMGACPKKHPLQVGAEASECTVFAAAEEGKGVVTEGFAESEILLTSSKEGESGECAVAESEDRVAGPLAAHTVQAEANVNSITTEEKDDAVTSAGSEEKCGGSACTVEGTATFIGEVESDGAVTSAGTEIRAGSLSSEDVDGSQENRIQVGPKKETEGTVTCTETKGRNDNFICLVTRVETQEQRVVTGADVVQVNAAKPQEANANQGDGSGTDGAEGESAVTSTGITEEDGEASANCTGSEDNREGCAISSETEESAESAMDSTEAKDITNAPLVAAGPCDDEGIVTSTGAKEEDDEDEGVVTSTGRGNEPGHASACTGIEESEGMMVCESGEGGAQIGPTIDHVNAEAGAATVNTNDSNVDSMSGAEKEIKDTNICSSAKGIVESSVTSALAGNSDRPPVLCGSEGPMASASSHHSDSQLTRKETVEDTTISTGLVKGSDDVLVSGEVPECEVGHMSPRKNEECDGLMASTASCDVSNKDSLAGSKSQGNGLMISTSTNACTPQISAVIDVRGGHLSTLSTEEIRDGVRVHREGFEAPMPSAVSGENSQLTASRSEEKDECAMISTSIGEEFELPISSAVTVTCAERQQPVAAVEESTTGPALVSTEDFEVPMPSAPTEAESPLASTSKEEKDECALISTSIAEECEASVFGVSRNAPSVTDGNAVISTSSVEDCEGSVSSAVPQESVCPSVIPVEETGDTAMISTSTSEGREAVMVGTIPTDDDQATTVRGEDLSDAAIISTSTAECVLTCTSLSRHEENQQATHNPEGNGGHLATKQSKCELPMPSLVAERNCKCPGPFRMGKGVGPLMAVGTRGEHDRLPVCEPSVGQGQPGTALCLGEEESHGMDCPGQDLNAKERNTLLSSVQRESKSAEAEAAGDSSTARRTVRKDSERNANSLSETNCLREPEQKPAEDTSGSTHCLTAVNPGAEADGMLPITHAALEYPDHQEPESNLKTTTKCITGQESQMPSSHTGVLSAVCHVAPCASEQEGGLPTKSDHSGTWTSEGSPEKMGHVAGARQSFHREGNLDVTLPPEDNGCGVGNEESPPKGIGGLELSTGLTTEISVSSEEDTSHGVVAAPENPCVGRRRGAAELQMEALLMRESLNVEKSESRINEEIHFESQNKEEICCGRKGSTEALSGCSVEADPEEVEEEEKQISQRNRKPDYSSSEEELDDSPDVLDSRIETAQRQYSETEPHDTKEENSGDVEEFSSVTSKTNSSTGLEDRDEFSSSEGTGEKTEPNEDDGSIKSQEDDHPIIIKRRRGRPRKYPAETAFKSKEDSKTETDITTVEQSSPSGKLKVSQADESNKEIANLEEKSTSNDDSEEKTASMRLRGRKPKRSLTSSDDAESSEPERKRQKSVSETSEDKKDEESDEEEEEEEEEEPLGATTRSATRSEAQRKNHSKPSTRATSKLGIPETISPRNRQKLAKEKLSTSEKVSKSPPLGRSKAQLSPSVKRKREVSPPGARTRGQQKVDENPLKKAKR.

The segment covering M1–G31 has biased composition (pro residues). 4 disordered regions span residues M1–D48, E164–V195, N214–D397, and V409–R465. Positions A32–A46 are enriched in gly residues. Residues K234–V243 are compositionally biased toward polar residues. Over residues S244 to T261 the composition is skewed to basic and acidic residues. S264 carries the phosphoserine modification. Positions T310–C391 are enriched in basic and acidic residues. The segment covering S416–E441 has biased composition (acidic residues). The residue at position 471 (K471) is an N6-acetyllysine. Phosphoserine is present on residues S480 and S482. Disordered regions lie at residues S480–T1153, M1165–N1296, G1309–D1366, A1424–R1491, G1675–T1701, A1740–S1858, and A1934–G1978. Basic and acidic residues-rich tracts occupy residues V488–L503 and R510–K525. The residue at position 534 (K534) is an N6-acetyllysine. Composition is skewed to basic and acidic residues over residues L547 to V568 and S578 to R653. A phosphoserine mark is found at S632 and S656. T657 is subject to Phosphothreonine. Composition is skewed to basic and acidic residues over residues T668–S736, G743–R768, and R799–K846. Residues A848–Q859 are compositionally biased toward polar residues. Composition is skewed to basic and acidic residues over residues K860–T872, K934–E960, A978–R1015, and S1022–R1069. Position 1071 is a phosphoserine (S1071). The span at M1086 to Q1096 shows a compositional bias: polar residues. S1138 carries the phosphoserine modification. Residues S1272–V1286 are compositionally biased toward low complexity. Residues A1312–V1329 show a composition bias toward polar residues. Phosphoserine is present on residues S1315 and S1364. Composition is skewed to basic and acidic residues over residues H1428–S1470 and G1479–R1491. 2 positions are modified to phosphoserine: S1676 and S1685. Basic and acidic residues predominate over residues H1958 to V1970. 4 positions are modified to phosphoserine: S1989, S2001, S2092, and S2166. Residues P2082 to E2101 are disordered. The segment covering S2088 to S2097 has biased composition (polar residues). Disordered regions lie at residues E2303–K2322, E2370–T2469, E2536–G2559, and D2575–G2596. Residues S2417 and S2443 each carry the phosphoserine modification. The segment covering C2449–E2459 has biased composition (basic and acidic residues). S2554 is modified (phosphoserine). S2681 is subject to Phosphoserine. The disordered stretch occupies residues T2682 to R3032. Composition is skewed to acidic residues over residues A2692–E2701 and S2715–D2725. A compositionally biased stretch (basic and acidic residues) spans L2727–N2750. Residues S2758–G2769 are compositionally biased toward polar residues. A compositionally biased stretch (basic and acidic residues) spans T2782–I2804. Positions I2805 to K2815 are enriched in basic residues. Positions K2807–E2819 form a DNA-binding region, a.T hook. Positions F2822–T2832 are enriched in basic and acidic residues. A compositionally biased stretch (polar residues) spans D2833–S2843. S2840 and S2841 each carry phosphoserine. The span at E2853–S2867 shows a compositional bias: basic and acidic residues. The residue at position 2888 (S2888) is a Phosphoserine. A Phosphothreonine modification is found at T2890. S2892, S2898, and S2907 each carry phosphoserine. Glycyl lysine isopeptide (Lys-Gly) (interchain with G-Cter in ubiquitin) cross-links involve residues K2915 and K2916. Acidic residues predominate over residues E2919–P2932. At S2920 the chain carries Phosphoserine. The span at L2975–S2987 shows a compositional bias: basic and acidic residues. At S3000 the chain carries Phosphoserine. The span at Q3020–R3032 shows a compositional bias: basic and acidic residues.

The protein belongs to the BOD1 family. As to quaternary structure, interacts (via COMPASS-Shg1 domain) with SETD1A at stalled replication forks; this interaction mediates FANCD2-dependent nucleosome remodeling at reversed forks protecting them from nucleolytic degradation.

It is found in the chromosome. Functionally, component of the fork protection machinery required to protect stalled/damaged replication forks from uncontrolled DNA2-dependent resection. Acts by stabilizing RAD51 at stalled replication forks and protecting RAD51 nucleofilaments from the antirecombinogenic activities of FBH1 and BLM. Does not regulate spindle orientation. The chain is Biorientation of chromosomes in cell division protein 1-like 1 from Mus musculus (Mouse).